The primary structure comprises 333 residues: Atrochrysone carboxyl ACP thioesterase MYCFIDRAFT_190111 (333 aa).

Positions 108, 110, 112, and 113 each coordinate Zn(2+). Asp-112 (proton donor/acceptor) is an active-site residue.

Belongs to the metallo-beta-lactamase superfamily. Zn(2+) is required as a cofactor.

The enzyme catalyses atrochrysone carboxyl-[ACP] + H2O = atrochrysone carboxylate + holo-[ACP] + H(+). It participates in secondary metabolite biosynthesis. Its function is as follows. Atrochrysone carboxyl ACP thioesterase; part of the gene cluster that mediates the biosynthesis of an emodin derivative that may be involved in black Sigatoka disease of banana. The pathway begins with the synthesis of atrochrysone thioester by the polyketide synthase PKS8-1. The atrochrysone carboxyl ACP thioesterase MYCFIDRAFT_190111 then breaks the thioester bond and releases the atrochrysone carboxylic acid from PKS8-1. The decarboxylase MYCFIDRAFT_34057 then catalyzes the concerted decarboxylation-elimination required to convert atochrysone carboxylic acid into emodin anthrone, which is further oxidized to emodin by the anthrone oxygenase MYCFIDRAFT_34418. The functions of the other tailoring enzymes as well as the final product of the cluster have still to be identified. This Pseudocercospora fijiensis (strain CIRAD86) (Black leaf streak disease fungus) protein is Atrochrysone carboxyl ACP thioesterase MYCFIDRAFT_190111.